A 436-amino-acid polypeptide reads, in one-letter code: UPF0597 protein DP0591 (436 aa).

The protein belongs to the UPF0597 family.

The protein is UPF0597 protein DP0591 of Desulfotalea psychrophila (strain LSv54 / DSM 12343).